Here is a 1520-residue protein sequence, read N- to C-terminus: Accessory colonization factor AcfD (1520 aa).

Positions 1–16 (MKIRIVSLIVLGFLIG) are cleaved as a signal peptide. A lipid anchor (N-palmitoyl cysteine) is attached at Cys-17. The S-diacylglycerol cysteine moiety is linked to residue Cys-17. Positions 1085-1388 (GNRQPTGQWA…MFAQLKEWAE (304 aa)) constitute a Peptidase M60 domain.

It localises to the cell membrane. This Vibrio cholerae serotype O1 (strain ATCC 39315 / El Tor Inaba N16961) protein is Accessory colonization factor AcfD (acfD).